Reading from the N-terminus, the 160-residue chain is Transcription elongation factor GreA (160 aa).

The stretch at 43–76 forms a coiled coil; the sequence is LSENAEYDAAREQQRQLENKIGDLESKLTRATIL.

It belongs to the GreA/GreB family.

Necessary for efficient RNA polymerase transcription elongation past template-encoded arresting sites. The arresting sites in DNA have the property of trapping a certain fraction of elongating RNA polymerases that pass through, resulting in locked ternary complexes. Cleavage of the nascent transcript by cleavage factors such as GreA or GreB allows the resumption of elongation from the new 3'terminus. GreA releases sequences of 2 to 3 nucleotides. This Chlorobium phaeobacteroides (strain BS1) protein is Transcription elongation factor GreA.